We begin with the raw amino-acid sequence, 433 residues long: Steroid C26-monooxygenase (433 aa).

Glycine 202 lines the substrate pocket. Position 377 (cysteine 377) interacts with heme.

It belongs to the cytochrome P450 family. Heme is required as a cofactor.

The enzyme catalyses cholest-4-en-3-one + 6 reduced [2Fe-2S]-[ferredoxin] + 3 O2 + 5 H(+) = (25S)-3-oxocholest-4-en-26-oate + 6 oxidized [2Fe-2S]-[ferredoxin] + 4 H2O. The protein operates within steroid metabolism; cholesterol degradation. Its function is as follows. Involved in the utilization of cholesterol as the sole carbon and energy source by degrading the side chain during infection. Primarily catalyzes the sequential oxidation of the terminal methyl of cholest-4-en-3-one into (25S)-26-hydroxycholest-4-en-3-one (alcohol), (25S)-26-oxocholest-4-en-3-one (aldehyde), to finally yield the carboxylic acid (25S)-3-oxocholest-4-en-26-oate. Also able to sequentially oxidize cholesterol itself, not only cholest-4-en-3-one. In Mycobacterium bovis (strain ATCC BAA-935 / AF2122/97), this protein is Steroid C26-monooxygenase (cyp125).